Here is a 670-residue protein sequence, read N- to C-terminus: MTNIQTQLDNLRKTLRQYEYEYHVLDNPSVPDSEYDRLFHQLKALELEHPEFLTSDSPTQRVGAKPLSGFSQIRHEIPMLSLDNAFSDAEFNAFVKRIEDRLILLPKPLTFCCEPKLDGLAVSILYVNGELTQAATRGDGTTGEDITANIRTIRNVPLQLLTDNPPARLEVRGEVFMPHAGFERLNKYALEHNEKTFANPRNAAAGSLRQLDPNITSKRPLVLNAYGIGIAEGVDLPTTHYARLQWLKSIGIPVNPEIRLCNGADEVLGFYRDIQNKRSSLGYDIDGTVLKINDIALQNELGFISKAPRWAIAYKFPAQEELTLLNDVEFQVGRTGAITPVAKLEPVFVAGVTVSNATLHNGDEIERLNIAIGDTVVIRRAGDVIPQIIGVLHERRPDNAKPIIFPTNCPVCDSQIIRIEGEAVARCTGGLFCAAQRKEALKHFVSRKAMDIDGVGGKLIEQLVDRELIHTPADLFKLDLTTLTRLERMGAKSAENALNSLENAKSTTLARFIFALGIREVGEATALNLANHFKTLDALKDANLEELQQVPDVGEVVANRIFIFWREAHNVAVVEDLIAQGVHWETVEVKEASENLFKDKTVVLTGTLTQMGRNEAKALLQQLGAKVSGSVSSKTDFVIAGDAAGSKLAKAQELNITVLTEEEFLAQITR.

Residues 32-36, 81-82, and E114 each bind NAD(+); these read DSEYD and SL. K116 (N6-AMP-lysine intermediate) is an active-site residue. 4 residues coordinate NAD(+): R137, E174, K291, and K315. 4 residues coordinate Zn(2+): C409, C412, C427, and C433. The 79-residue stretch at 592-670 folds into the BRCT domain; it reads ASENLFKDKT…EEEFLAQITR (79 aa).

The protein belongs to the NAD-dependent DNA ligase family. LigA subfamily. The cofactor is Mg(2+). Mn(2+) is required as a cofactor.

The catalysed reaction is NAD(+) + (deoxyribonucleotide)n-3'-hydroxyl + 5'-phospho-(deoxyribonucleotide)m = (deoxyribonucleotide)n+m + AMP + beta-nicotinamide D-nucleotide.. In terms of biological role, DNA ligase that catalyzes the formation of phosphodiester linkages between 5'-phosphoryl and 3'-hydroxyl groups in double-stranded DNA using NAD as a coenzyme and as the energy source for the reaction. It is essential for DNA replication and repair of damaged DNA. The protein is DNA ligase of Haemophilus influenzae (strain ATCC 51907 / DSM 11121 / KW20 / Rd).